Consider the following 298-residue polypeptide: Probable protein phosphatase 2C 26 (298 aa).

Residues 48-295 enclose the PPM-type phosphatase domain; the sequence is SVGIHAIPHP…DDVTVIVAKV (248 aa). Mn(2+) is bound by residues aspartate 82, glycine 83, aspartate 213, and aspartate 286.

The protein belongs to the PP2C family. It depends on Mg(2+) as a cofactor. Mn(2+) is required as a cofactor.

It catalyses the reaction O-phospho-L-seryl-[protein] + H2O = L-seryl-[protein] + phosphate. The catalysed reaction is O-phospho-L-threonyl-[protein] + H2O = L-threonyl-[protein] + phosphate. The chain is Probable protein phosphatase 2C 26 from Arabidopsis thaliana (Mouse-ear cress).